A 299-amino-acid polypeptide reads, in one-letter code: Probable tyrosine phosphatase protein J4 (299 aa).

One can recognise a Tyrosine-protein phosphatase domain in the interval 16–289; it reads VEALDFLSFM…VYCYQALYVW (274 aa). The active-site Phosphocysteine intermediate is cysteine 230.

This sequence belongs to the protein-tyrosine phosphatase family.

The enzyme catalyses O-phospho-L-tyrosyl-[protein] + H2O = L-tyrosyl-[protein] + phosphate. This is Probable tyrosine phosphatase protein J4 (J5) from Microplitis demolitor bracovirus (isolate Webb) (MdBV).